The primary structure comprises 136 residues: Large ribosomal subunit protein uL16 (136 aa).

Belongs to the universal ribosomal protein uL16 family. Part of the 50S ribosomal subunit.

Its function is as follows. Binds 23S rRNA and is also seen to make contacts with the A and possibly P site tRNAs. The sequence is that of Large ribosomal subunit protein uL16 from Ehrlichia chaffeensis (strain ATCC CRL-10679 / Arkansas).